Reading from the N-terminus, the 275-residue chain is Putative pyruvate, phosphate dikinase regulatory protein (275 aa).

Position 149-156 (glycine 149–threonine 156) interacts with ADP.

Belongs to the pyruvate, phosphate/water dikinase regulatory protein family. PDRP subfamily.

The catalysed reaction is N(tele)-phospho-L-histidyl/L-threonyl-[pyruvate, phosphate dikinase] + ADP = N(tele)-phospho-L-histidyl/O-phospho-L-threonyl-[pyruvate, phosphate dikinase] + AMP + H(+). It catalyses the reaction N(tele)-phospho-L-histidyl/O-phospho-L-threonyl-[pyruvate, phosphate dikinase] + phosphate + H(+) = N(tele)-phospho-L-histidyl/L-threonyl-[pyruvate, phosphate dikinase] + diphosphate. Bifunctional serine/threonine kinase and phosphorylase involved in the regulation of the pyruvate, phosphate dikinase (PPDK) by catalyzing its phosphorylation/dephosphorylation. The polypeptide is Putative pyruvate, phosphate dikinase regulatory protein (Levilactobacillus brevis (strain ATCC 367 / BCRC 12310 / CIP 105137 / JCM 1170 / LMG 11437 / NCIMB 947 / NCTC 947) (Lactobacillus brevis)).